A 465-amino-acid chain; its full sequence is Hexokinase type 1 (465 aa).

The Hexokinase domain maps to 8–447; it reads EEDFPEVYKV…CGVGAAIMAG (440 aa). The segment at 65–197 is hexokinase small subdomain; the sequence is TGRERGQFLA…EISVDVMGII (133 aa). An ATP-binding site is contributed by K88. The interval 139 to 165 is glucose-binding; it reads PLGIAFAFTLKKLALDVGILVSWTKEF. The interval 198-436 is hexokinase large subdomain; sequence NVGAGSLLAL…YNFEFVITQD (239 aa).

Belongs to the hexokinase family.

The enzyme catalyses a D-hexose + ATP = a D-hexose 6-phosphate + ADP + H(+). It carries out the reaction D-mannose + ATP = D-mannose 6-phosphate + ADP + H(+). It catalyses the reaction D-fructose + ATP = D-fructose 6-phosphate + ADP + H(+). The catalysed reaction is D-glucose + ATP = D-glucose 6-phosphate + ADP + H(+). It participates in carbohydrate metabolism; hexose metabolism. It functions in the pathway carbohydrate degradation; glycolysis; D-glyceraldehyde 3-phosphate and glycerone phosphate from D-glucose: step 1/4. Its function is as follows. Catalyzes the phosphorylation of various hexoses to hexose 6-phosphate. The sequence is that of Hexokinase type 1 (Hex-t1) from Drosophila melanogaster (Fruit fly).